The primary structure comprises 1414 residues: Alpha-(1-&gt;3)-arabinofuranosyltransferase (1414 aa).

A run of 9 helical transmembrane segments spans residues 57-77 (YLFP…PGWV), 81-101 (LWWA…AEAL), 128-148 (AISS…PVIL), 167-187 (VALM…AAVI), 203-223 (AWWL…LLML), 273-293 (STTA…GLAL), 302-322 (LITM…GGLG), 352-372 (LPLA…GSAP), and 389-409 (VAVA…AWTA). One can recognise an F5/8 type C domain in the interval 687-845 (YPSDGADLVY…QYDASGFAHP (159 aa)). 4 consecutive transmembrane segments (helical) span residues 1253 to 1273 (VGLI…LIPV), 1297 to 1317 (ALVA…GAAM), 1333 to 1353 (VWDN…GSVL), and 1364 to 1384 (YVGH…FLAA). The segment at 1393–1414 (PEPSEDGRSAKPEHTGASAHAG) is disordered. Basic and acidic residues predominate over residues 1394–1406 (EPSEDGRSAKPEH).

The protein localises to the membrane. It carries out the reaction Adds an alpha-D-arabinofuranosyl group from trans,octacis-decaprenylphospho-beta-D-arabinofuranose at the 3-O-position of an alpha-(1-&gt;5)-arabinofuranan chain attached to a beta-(1-&gt;5)-galactofuranan chain.. It participates in cell wall biogenesis; cell wall polysaccharide biosynthesis. Involved in the biosynthesis of the arabinogalactan (AG) region of the mycolylarabinogalactan-peptidoglycan (mAGP) complex, an essential component of the mycobacterial cell wall. Catalyzes the addition of an arabinofuranosyl (Araf) residue from the sugar donor decaprenyl-phospho-arabinose (DPA) on the C-3 of an alpha-(1-&gt;5)-linked Araf from the arabinan backbone of AG. This Mycolicibacterium smegmatis (strain ATCC 700084 / mc(2)155) (Mycobacterium smegmatis) protein is Alpha-(1-&gt;3)-arabinofuranosyltransferase (aftD).